The chain runs to 175 residues: Myosin regulatory light chain 2, atrial isoform (175 aa).

At alanine 2 the chain carries N-acetylalanine. Phosphoserine occurs at positions 22 and 23. EF-hand domains lie at 32 to 67 (AQIQEFKEAFSCIDQNRDGIICKSDLRETYSQLGKV), 102 to 137 (DPEEAILSAFRLFDPSGKGVVNKDQFKQLLLTQADK), and 138 to 173 (FSPAEVEQMFALTPMDLAGNIDYKSLCYIITHGDEK). Ca(2+) is bound by residues aspartate 45, asparagine 47, aspartate 49, and aspartate 56.

In terms of assembly, myosin is a hexamer of 2 heavy chains and 4 light chains.

In Sus scrofa (Pig), this protein is Myosin regulatory light chain 2, atrial isoform (MYL7).